The sequence spans 668 residues: Phosphatidylinositol 4-phosphate 5-kinase type-1 gamma (668 aa).

The segment at 45 to 67 (SMTAQPGPGHGKKLGHRGVDASG) is disordered. A PIPK domain is found at 75 to 443 (TSSTLKGAIQ…RFFKFMSNTV (369 aa)). N6-acetyllysine is present on residues lysine 265 and lysine 268. Arginine 459 is modified (asymmetric dimethylarginine; alternate). An Omega-N-methylarginine; alternate modification is found at arginine 459. Positions 526 to 535 (TTLSSTSLSI) are enriched in low complexity. Disordered regions lie at residues 526–578 (TTLS…ITVQ) and 593–642 (EDAG…YFPT). Serine 555 carries the post-translational modification Phosphoserine. Tyrosine 639 carries the post-translational modification Phosphotyrosine; by EGFR. The mediates interaction with TLN2 stretch occupies residues 641-668 (PTDERSWVYSPLHYSAQAPPASDGESDT). At tyrosine 649 the chain carries Phosphotyrosine; by CSK. A Phosphoserine; by CDK5, MAPK1 and CDK1 modification is found at serine 650. A phosphoserine mark is found at serine 662 and serine 666. Threonine 668 carries the phosphothreonine modification.

In terms of assembly, interacts with TLN1. Interacts with TLN2; interaction stimulates 1-phosphatidylinositol-4-phosphate 5-kinase activity. May compete with beta-integrins for the same binding site on TLN1 and TLN2. Interacts with ARF6; interaction stimulates 1-phosphatidylinositol-4-phosphate 5-kinase activity. Interacts with AP2B1. Interacts with AP2M1; phosphorylation of PIP5K1C by CSK disrupts the interaction; clathrin competes with PIP5K1C. Interacts with CDH1. Interacts with CSK. Interacts with PLCG1; interaction is abolished upon EGF stimulation. Interacts with LAPTM4B; promotes SNX5 association with LAPTM4B; kinase activity of PIP5K1C is required; interaction is regulated by phosphatidylinositol 4,5-bisphosphate generated by PIP5K1C. Phosphorylation on Ser-650 negatively regulates binding to TLN2 and is strongly stimulated in mitosis. Phosphorylation on Tyr-649 is necessary for targeting to focal adhesions. Phosphorylation on Ser-650 and Tyr-649 are mutually exclusive. Phosphorylated by SYK and CSK. Tyrosine phosphorylation is enhanced by PTK2 signaling. Phosphorylated at Tyr-639 upon EGF stimulation. Some studies suggest that phosphorylation on Tyr-649 enhances binding to tailins (TLN1 and TLN2). According to PubMed:15738269 phosphorylation at Tyr-649 does not directly enhance binding to tailins (TLN1 and TLN2) but may act indirectly by inhibiting phosphorylation at Ser-650. Post-translationally, acetylation at Lys-265 and Lys-268 seems to decrease lipid 1-phosphatidylinositol-4-phosphate 5-kinase activity. Deacetylation of these sites by SIRT1 positively regulates the exocytosis of TSH-containing granules from pituitary cells. Isoform 1 is strongly expressed in brain and also detected in heart and lung. As to expression, isoform 2 is strongly expressed in pancreas and liver and in lesser quantities in brain, heart, lung and kidney. In terms of tissue distribution, isoform 3 is detected in large amounts in heart and large intestine, is also present in lung, pancreas and thyroid, and to a lesser extent in brain, stomach and kidney.

The protein resides in the cell membrane. It is found in the endomembrane system. Its subcellular location is the cytoplasm. The protein localises to the cell junction. It localises to the focal adhesion. The protein resides in the adherens junction. It is found in the cell projection. Its subcellular location is the ruffle membrane. The protein localises to the phagocytic cup. It localises to the uropodium. The protein resides in the nucleus. The catalysed reaction is a 1,2-diacyl-sn-glycero-3-phospho-(1D-myo-inositol 4-phosphate) + ATP = a 1,2-diacyl-sn-glycero-3-phospho-(1D-myo-inositol-4,5-bisphosphate) + ADP + H(+). The enzyme catalyses 1-octadecanoyl-2-(5Z,8Z,11Z,14Z)-eicosatetraenoyl-sn-glycero-3-phospho-1D-myo-inositol 4-phosphate + ATP = 1-octadecanoyl-2-(5Z,8Z,11Z,14Z)-eicosatetraenoyl-sn-glycero-3-phospho-1D-myo-inositol 4,5-bisphosphate + ADP + H(+). It catalyses the reaction 1-octadecanoyl-2-(9Z)-octadecenoyl-sn-glycero-3-phospho-1D-myo-inositol 4-phosphate + ATP = 1-octadecanoyl-2-(9Z)-octadecenoyl-sn-glycero-3-phospho-1D-myo-inositol 4,5-bisphosphate + ADP + H(+). It carries out the reaction 1-octadecanoyl-2-(9Z)-octadecenoyl-sn-glycero-3-phospho-1D-myo-inositol + ATP = 1-octadecanoyl-2-(9Z)-octadecenoyl-sn-glycero-3-phospho-1D-myo-inositol 5-phosphate + ADP + H(+). The catalysed reaction is 1-octadecanoyl-2-(9Z,12Z)-octadecadienoyl-sn-glycero-3-phospho-1D-myo-inositol + ATP = 1-octadecanoyl-2-(9Z,12Z)-octadecadienoyl-sn-glycero-3-phospho-1D-myo-inositol 5-phosphate + ADP + H(+). The enzyme catalyses 1-octadecanoyl-2-(5Z,8Z,11Z,14Z-eicosatetraenoyl)-sn-glycero-3-phospho-(1D-myo-inositol) + ATP = 1-octadecanoyl-2-(5Z,8Z,11Z,14Z)-eicosatetraenoyl-sn-glycero-3-phospho-1D-myo-inositol 5-phosphate + ADP + H(+). It catalyses the reaction 1,2-di-(9Z,12Z)-octadecadienoyl-sn-glycero-3-phospho-1D-myo-inositol + ATP = 1,2-di(9Z,12Z)-octadecadienoyl-sn-glycero-3-phospho-1D-myo-inositol 5-phosphate + ADP + H(+). Functionally, catalyzes the phosphorylation of phosphatidylinositol 4-phosphate (PtdIns(4)P/PI4P) to form phosphatidylinositol 4,5-bisphosphate (PtdIns(4,5)P2/PIP2), a lipid second messenger that regulates several cellular processes such as signal transduction, vesicle trafficking, actin cytoskeleton dynamics, cell adhesion, and cell motility. PtdIns(4,5)P2 can directly act as a second messenger or can be utilized as a precursor to generate other second messengers: inositol 1,4,5-trisphosphate (IP3), diacylglycerol (DAG) or phosphatidylinositol-3,4,5-trisphosphate (PtdIns(3,4,5)P3/PIP3). PIP5K1A-mediated phosphorylation of PtdIns(4)P is the predominant pathway for PtdIns(4,5)P2 synthesis. Together with PIP5K1A, is required for phagocytosis, both enzymes regulating different types of actin remodeling at sequential steps. Promotes particle attachment by generating the pool of PtdIns(4,5)P2 that induces controlled actin depolymerization to facilitate Fc-gamma-R clustering. Mediates RAC1-dependent reorganization of actin filaments. Required for synaptic vesicle transport. Controls the plasma membrane pool of PtdIns(4,5)P2 implicated in synaptic vesicle endocytosis and exocytosis. Plays a role in endocytosis mediated by clathrin and AP-2 (adaptor protein complex 2). Required for clathrin-coated pits assembly at the synapse. Participates in cell junction assembly. Modulates adherens junctions formation by facilitating CDH1/cadherin trafficking. Required for focal adhesion dynamics. Modulates the targeting of talins (TLN1 and TLN2) to the plasma membrane and their efficient assembly into focal adhesions. Regulates the interaction between talins (TLN1 and TLN2) and beta-integrins. Required for uropodium formation and retraction of the cell rear during directed migration. Has a role in growth factor-stimulated directional cell migration and adhesion. Required for talin assembly into nascent adhesions forming at the leading edge toward the direction of the growth factor. Negative regulator of T-cell activation and adhesion. Negatively regulates integrin alpha-L/beta-2 (LFA-1) polarization and adhesion induced by T-cell receptor. Together with PIP5K1A has a role during embryogenesis and together with PIP5K1B may have a role immediately after birth. The sequence is that of Phosphatidylinositol 4-phosphate 5-kinase type-1 gamma from Homo sapiens (Human).